The following is a 271-amino-acid chain: Shikimate dehydrogenase (NADP(+)) (271 aa).

Shikimate-binding positions include 15-17 and Thr62; that span reads SKS. Lys66 acts as the Proton acceptor in catalysis. An NADP(+)-binding site is contributed by Glu78. 2 residues coordinate shikimate: Asn87 and Asp103. Residues 127 to 131, 151 to 156, and Met214 each bind NADP(+); these read GAGGA and NRTQAK. Position 216 (Tyr216) interacts with shikimate. Gly238 contributes to the NADP(+) binding site.

This sequence belongs to the shikimate dehydrogenase family. In terms of assembly, homodimer.

It carries out the reaction shikimate + NADP(+) = 3-dehydroshikimate + NADPH + H(+). The protein operates within metabolic intermediate biosynthesis; chorismate biosynthesis; chorismate from D-erythrose 4-phosphate and phosphoenolpyruvate: step 4/7. Involved in the biosynthesis of the chorismate, which leads to the biosynthesis of aromatic amino acids. Catalyzes the reversible NADPH linked reduction of 3-dehydroshikimate (DHSA) to yield shikimate (SA). The protein is Shikimate dehydrogenase (NADP(+)) of Shewanella pealeana (strain ATCC 700345 / ANG-SQ1).